Here is a 280-residue protein sequence, read N- to C-terminus: uncharacterized protein (280 aa).

7 helical membrane passes run 6-26, 38-58, 79-99, 105-125, 144-164, 171-191, and 231-251; these read YLVI…TPLV, VLAI…YLFP, IFLL…VFLK, GVLA…ELIF, NQIY…IILW, ISFF…ALMV, and LVFI…TLFA.

The protein localises to the cell membrane. This is an uncharacterized protein from Mycoplasma genitalium (strain ATCC 33530 / DSM 19775 / NCTC 10195 / G37) (Mycoplasmoides genitalium).